The sequence spans 946 residues: Protein TMA108 (946 aa).

Ser2 bears the N-acetylserine mark. Met293–Asn297 provides a ligand contact to substrate. His330 is a Zn(2+) binding site. Glu331 serves as the catalytic Proton acceptor. Zn(2+) contacts are provided by His334 and Glu353.

This sequence belongs to the peptidase M1 family. As to quaternary structure, associates with ribosomal complexes. The cofactor is Zn(2+).

The protein resides in the cytoplasm. Its function is as follows. Putative zinc aminopeptidase which may be involved in ribosome biogenesis. In Saccharomyces cerevisiae (strain ATCC 204508 / S288c) (Baker's yeast), this protein is Protein TMA108 (TMA108).